We begin with the raw amino-acid sequence, 271 residues long: Carboxy-terminal domain RNA polymerase II polypeptide A small phosphatase 2 (271 aa).

S5 is subject to Phosphoserine. In terms of domain architecture, FCP1 homology spans 97–255 (EDQGRICVVI…LNLIPIFEEL (159 aa)). The 4-aspartylphosphate intermediate role is filled by D107. Mg(2+) contacts are provided by D107, D109, and N218. D109 functions as the Proton donor in the catalytic mechanism.

As to quaternary structure, monomer. Interacts with REST. Mg(2+) is required as a cofactor. As to expression, expression is restricted to non-neuronal tissues. Highest expression in pancreas and lowest in liver.

Its subcellular location is the nucleus. It catalyses the reaction O-phospho-L-seryl-[protein] + H2O = L-seryl-[protein] + phosphate. The enzyme catalyses O-phospho-L-threonyl-[protein] + H2O = L-threonyl-[protein] + phosphate. In terms of biological role, preferentially catalyzes the dephosphorylation of 'Ser-5' within the tandem 7 residue repeats in the C-terminal domain (CTD) of the largest RNA polymerase II subunit POLR2A. Negatively regulates RNA polymerase II transcription, possibly by controlling the transition from initiation/capping to processive transcript elongation. Recruited by REST to neuronal genes that contain RE-1 elements, leading to neuronal gene silencing in non-neuronal cells. May contribute to the development of sarcomas. The sequence is that of Carboxy-terminal domain RNA polymerase II polypeptide A small phosphatase 2 (CTDSP2) from Homo sapiens (Human).